Here is a 113-residue protein sequence, read N- to C-terminus: UPF0342 protein MGAS10750_Spy0713 (113 aa).

This sequence belongs to the UPF0342 family.

This is UPF0342 protein MGAS10750_Spy0713 from Streptococcus pyogenes serotype M4 (strain MGAS10750).